A 173-amino-acid chain; its full sequence is NADH-ubiquinone oxidoreductase chain 6 (173 aa).

The next 5 membrane-spanning stretches (helical) occupy residues 1-21 (MTYI…AVAS), 27-47 (FAAL…VGYG), 53-73 (LVLF…SAAL), 86-106 (SVLG…GWFW), and 139-159 (YGGG…FVVL).

It belongs to the complex I subunit 6 family.

Its subcellular location is the mitochondrion membrane. The enzyme catalyses a ubiquinone + NADH + 5 H(+)(in) = a ubiquinol + NAD(+) + 4 H(+)(out). Functionally, core subunit of the mitochondrial membrane respiratory chain NADH dehydrogenase (Complex I) that is believed to belong to the minimal assembly required for catalysis. Complex I functions in the transfer of electrons from NADH to the respiratory chain. The immediate electron acceptor for the enzyme is believed to be ubiquinone. The polypeptide is NADH-ubiquinone oxidoreductase chain 6 (MT-ND6) (Salmo salar (Atlantic salmon)).